Reading from the N-terminus, the 271-residue chain is Formamidopyrimidine-DNA glycosylase (271 aa).

Residue Pro2 is the Schiff-base intermediate with DNA of the active site. The Proton donor role is filled by Glu3. Lys58 serves as the catalytic Proton donor; for beta-elimination activity. His92, Arg111, and Arg152 together coordinate DNA. The FPG-type zinc finger occupies 237–271 (TVYGREGEPCKQCGRVLKHAMIGQRATVWCGSCQR). The active-site Proton donor; for delta-elimination activity is Arg261.

The protein belongs to the FPG family. As to quaternary structure, monomer. It depends on Zn(2+) as a cofactor.

It catalyses the reaction Hydrolysis of DNA containing ring-opened 7-methylguanine residues, releasing 2,6-diamino-4-hydroxy-5-(N-methyl)formamidopyrimidine.. The enzyme catalyses 2'-deoxyribonucleotide-(2'-deoxyribose 5'-phosphate)-2'-deoxyribonucleotide-DNA = a 3'-end 2'-deoxyribonucleotide-(2,3-dehydro-2,3-deoxyribose 5'-phosphate)-DNA + a 5'-end 5'-phospho-2'-deoxyribonucleoside-DNA + H(+). Its function is as follows. Involved in base excision repair of DNA damaged by oxidation or by mutagenic agents. Acts as a DNA glycosylase that recognizes and removes damaged bases. Has a preference for oxidized purines, such as 7,8-dihydro-8-oxoguanine (8-oxoG). Has AP (apurinic/apyrimidinic) lyase activity and introduces nicks in the DNA strand. Cleaves the DNA backbone by beta-delta elimination to generate a single-strand break at the site of the removed base with both 3'- and 5'-phosphates. This Xanthomonas oryzae pv. oryzae (strain MAFF 311018) protein is Formamidopyrimidine-DNA glycosylase.